Reading from the N-terminus, the 103-residue chain is N(4)-acetylcytidine amidohydrolase (103 aa).

An ASCH domain is found at 6-94; the sequence is ITFFQRFQND…IAEIYPNQTQ (89 aa). Lysine 21 (proton acceptor) is an active-site residue. Threonine 24 functions as the Nucleophile in the catalytic mechanism. Residue glutamate 74 is the Proton donor of the active site.

Belongs to the N(4)-acetylcytidine amidohydrolase family.

It carries out the reaction N(4)-acetylcytidine + H2O = cytidine + acetate + H(+). The catalysed reaction is N(4)-acetyl-2'-deoxycytidine + H2O = 2'-deoxycytidine + acetate + H(+). The enzyme catalyses N(4)-acetylcytosine + H2O = cytosine + acetate + H(+). Catalyzes the hydrolysis of N(4)-acetylcytidine (ac4C). The protein is N(4)-acetylcytidine amidohydrolase (yqfB) of Salmonella heidelberg (strain SL476).